We begin with the raw amino-acid sequence, 505 residues long: MAVWLSTQNKFYLPPQPVTKIPSTDEYVTRTNVFYYASSDRLLTVGHPYYEIRDKGTMLVPKVSPNQYRVFRIKLPDPNKFAFGDKQLYDPEKERLVWCLRGIEVNRGQPLGVSVTGNPIFNKFDDVENPTKYYNNHADQQDYRKSMAFDPKQVQLLMLGCVPATGEHWAQAKQCAEDPPQQTDCPPIELVNTVIEDGDMCEIGFGAMDHKTLQASLSEVPLELAQSISKYPDYLKMQKDQFGDSMFFYARREQMYARHFFSRAGGDKENVKSRAYIKRTQMQGEANANIATDNYCITPSGSLVSSDSQVFNRAYWLQKAQGMNNGVCWDNQIFVTVVDNTRGTILSLVTKSKEQIKKTHGKTVHFSSYLRHVEEYELQFVLQLCKVKLTPENLSYLHSMHPTIIDNWQLSVSAQPSGTLEDQYRYLQSIATKCPPPEPPKENTDPYKNYKFWEVDLSEKLSDQLDQYPLGRKFLNQSGLQRIGTKRPAPAPVSIVKSSKRKRRT.

The segment at 479–505 (GLQRIGTKRPAPAPVSIVKSSKRKRRT) is disordered.

Belongs to the papillomaviridae L1 protein family. Self-assembles into homopentamers. The capsid has an icosahedral symmetry and consists of 72 capsomers, with each capsomer being a pentamer of L1. Interacts with the minor capsid protein L2; this interaction is necessary for viral genome encapsidation. Interacts with protein E2; this interaction enhances E2-dependent replication and transcription activation.

It is found in the virion. Its subcellular location is the host nucleus. Functionally, forms an icosahedral capsid with a T=7 symmetry and a 50 nm diameter. The capsid is composed of 72 pentamers linked to each other by disulfide bonds and associated with L2 proteins. Binds to heparan sulfate proteoglycans on cell surface of basal layer keratinocytes to provide initial virion attachment. This binding mediates a conformational change in the virus capsid that facilitates efficient infection. The virion enters the host cell via endocytosis. During virus trafficking, L1 protein dissociates from the viral DNA and the genomic DNA is released to the host nucleus. The virion assembly takes place within the cell nucleus. Encapsulates the genomic DNA together with protein L2. The sequence is that of Major capsid protein L1 from Sylvilagus floridanus (Cottontail rabbit).